Here is a 237-residue protein sequence, read N- to C-terminus: Probable transcriptional regulatory protein Exig_1693 (237 aa).

This sequence belongs to the TACO1 family. YeeN subfamily.

It localises to the cytoplasm. This is Probable transcriptional regulatory protein Exig_1693 from Exiguobacterium sibiricum (strain DSM 17290 / CCUG 55495 / CIP 109462 / JCM 13490 / 255-15).